Here is a 250-residue protein sequence, read N- to C-terminus: 2,3-bisphosphoglycerate-dependent phosphoglycerate mutase (250 aa).

Residues 8–15 (RHGQSAWN), 21–22 (TG), Arg-60, 87–90 (ERHY), Lys-98, 114–115 (RR), and 183–184 (GN) each bind substrate. His-9 functions as the Tele-phosphohistidine intermediate in the catalytic mechanism. Glu-87 acts as the Proton donor/acceptor in catalysis.

It belongs to the phosphoglycerate mutase family. BPG-dependent PGAM subfamily. Homodimer.

It carries out the reaction (2R)-2-phosphoglycerate = (2R)-3-phosphoglycerate. It participates in carbohydrate degradation; glycolysis; pyruvate from D-glyceraldehyde 3-phosphate: step 3/5. Functionally, catalyzes the interconversion of 2-phosphoglycerate and 3-phosphoglycerate. The sequence is that of 2,3-bisphosphoglycerate-dependent phosphoglycerate mutase from Nitratidesulfovibrio vulgaris (strain DP4) (Desulfovibrio vulgaris).